The following is a 178-amino-acid chain: Nicotinamide-nucleotide adenylyltransferase (178 aa).

Belongs to the archaeal NMN adenylyltransferase family.

It is found in the cytoplasm. It catalyses the reaction beta-nicotinamide D-ribonucleotide + ATP + H(+) = diphosphate + NAD(+). It functions in the pathway cofactor biosynthesis; NAD(+) biosynthesis; NAD(+) from nicotinamide D-ribonucleotide: step 1/1. This Thermoplasma volcanium (strain ATCC 51530 / DSM 4299 / JCM 9571 / NBRC 15438 / GSS1) protein is Nicotinamide-nucleotide adenylyltransferase.